Consider the following 234-residue polypeptide: LRP chaperone MESD (234 aa).

An N-terminal signal peptide occupies residues 1-33 (MAASRWARKAVVLLCASDLLLLLLLLPPPGSCA). A chaperone domain region spans residues 1–164 (MAASRWARKA…DRAIFMLRDG (164 aa)). 2 disordered regions span residues 31 to 95 (SCAA…DFSK) and 187 to 234 (GQVY…REDL). Basic and acidic residues predominate over residues 54-70 (DIRDYNDADMARLLEQW). Residues 71-80 (EKDDDIEEGD) are compositionally biased toward acidic residues. Positions 165 to 204 (SYAWEIKDFLVGQDRCADVTLEGQVYPGKGGGSKEKNKTK) are escort domain. The span at 196–234 (GSKEKNKTKQDKGKKKKEGDLKSRSSKEENRAGNKREDL) shows a compositional bias: basic and acidic residues. The N-linked (GlcNAc...) asparagine glycan is linked to asparagine 201. Residues 231 to 234 (REDL) carry the Prevents secretion from ER motif.

The protein belongs to the MESD family. As to quaternary structure, monomer. Interacts with LRP5; the interaction prevents LRP5 from forming aggregates and chaperones LRP6 to the plasma membrane. Interacts with LRP6; the interaction prevents LRP6 from forming aggregates and chaperones LRP6 to the plasma membrane. Interacts with LRP4; the interaction promotes glycosylation of LRP4 and its cell-surface expression.

It localises to the endoplasmic reticulum. Its function is as follows. Chaperone specifically assisting the folding of beta-propeller/EGF modules within the family of low-density lipoprotein receptors (LDLRs). Acts as a modulator of the Wnt pathway through chaperoning the coreceptors of the canonical Wnt pathway, LRP5 and LRP6, to the plasma membrane. Essential for specification of embryonic polarity and mesoderm induction. Plays an essential role in neuromuscular junction (NMJ) formation by promoting cell-surface expression of LRP4. May regulate phagocytosis of apoptotic retinal pigment epithelium (RPE) cells. This Homo sapiens (Human) protein is LRP chaperone MESD.